Reading from the N-terminus, the 165-residue chain is Small ribosomal subunit protein uS17m (165 aa).

It belongs to the universal ribosomal protein uS17 family. As to quaternary structure, component of the mitochondrial small ribosomal subunit (mt-SSU). Mature N.crassa 74S mitochondrial ribosomes consist of a small (37S) and a large (54S) subunit. The 37S small subunit contains a 16S ribosomal RNA (16S mt-rRNA) and 32 different proteins. The 54S large subunit contains a 23S rRNA (23S mt-rRNA) and 42 different proteins. uS17m interacts with the F(1)-ATPase inhibitor IF(1) dimer.

The protein localises to the mitochondrion. Functionally, component of the mitochondrial ribosome (mitoribosome), a dedicated translation machinery responsible for the synthesis of mitochondrial genome-encoded proteins, including at least some of the essential transmembrane subunits of the mitochondrial respiratory chain. The mitoribosomes are attached to the mitochondrial inner membrane and translation products are cotranslationally integrated into the membrane. This Neurospora crassa (strain ATCC 24698 / 74-OR23-1A / CBS 708.71 / DSM 1257 / FGSC 987) protein is Small ribosomal subunit protein uS17m (mrps17).